A 310-amino-acid polypeptide reads, in one-letter code: Tetrahydromethanopterin S-methyltransferase subunit H (310 aa).

This sequence belongs to the MtrH family. As to quaternary structure, the complex is composed of 8 subunits; MtrA, MtrB, MtrC, MtrD, MtrE, MtrF, MtrG and MtrH.

The catalysed reaction is 5-methyl-5,6,7,8-tetrahydromethanopterin + coenzyme M + 2 Na(+)(in) = 5,6,7,8-tetrahydromethanopterin + methyl-coenzyme M + 2 Na(+)(out). Its pathway is one-carbon metabolism; methanogenesis from CO(2); methyl-coenzyme M from 5,10-methylene-5,6,7,8-tetrahydromethanopterin: step 2/2. Its function is as follows. Part of a complex that catalyzes the formation of methyl-coenzyme M and tetrahydromethanopterin from coenzyme M and methyl-tetrahydromethanopterin. This is an energy-conserving, sodium-ion translocating step. MtrH catalyzes the transfer of the methyl group from methyl-tetrahydromethanopterin to the corrinoid prosthetic group of MtrA. The chain is Tetrahydromethanopterin S-methyltransferase subunit H from Methanothermobacter thermautotrophicus (strain ATCC 29096 / DSM 1053 / JCM 10044 / NBRC 100330 / Delta H) (Methanobacterium thermoautotrophicum).